We begin with the raw amino-acid sequence, 1094 residues long: Probable arabinosyltransferase C (1094 aa).

The next 13 helical transmembrane spans lie at I28–L50, A232–L251, P264–F286, S341–S360, T373–L392, I431–I453, R466–F488, S530–L552, S565–T582, W586–V608, T620–Y642, W657–F679, and L700–S722. Residues G817–G831 are compositionally biased toward low complexity. A disordered region spans residues G817 to R836.

This sequence belongs to the emb family.

Its subcellular location is the cell membrane. Its function is as follows. Arabinosyl transferase responsible for the polymerization of arabinose into the arabinan of arabinogalactan. This is Probable arabinosyltransferase C (embC) from Mycobacterium tuberculosis (strain CDC 1551 / Oshkosh).